The chain runs to 847 residues: MADSKISPGMQQYLDIKAQYPDAFLLFRMGDFYELFYDDAVKAAQLLEIGLTSRNKNAENPIPMAGVPHHSAQQYIDILIELGYKVAIAEQMEDPKKAVGVVKREVVQVITPGTVVDSAKPNSSNNFLIAIDFDGSHYGLSYMDLVTGEFFATTLSDFMSVCGEILNLKAKEVVIGFEITAEQEEQLQKQFRLLLSYEQEIYTDDTLINPNLSQVEKNVAGKLLQYVHQTQMRELSHLQELIHYDIKDYLQMSYATKSSLDLIENARTKKKHGSLYWLLDETKTAMGMRLLKTWIDRPLISKQAISERQNIVETFLESFIERSDLADSLKGVYDIERLSSRVSFGKVNPKDLLQLGHTLSQVPYIKAVLEAINSPHLSKVIATIDPIPELESLIHSAIDPDAPATISEGSIIKTGFDQRLDHYRKVMKEGTGWIADIEMKERQASGINNLKIDYNKKDGYYFHVTNSNLSLVPDHFFRKATLKNSERYGTAELAKIEGQMLEAREESAQLEYDIFMRIREKVETYIDRLQTLAKAIATVDVLQGLAYVAEKNHYVRPEFASQKVITIQNGRHAVVEKVMGVQEYIPNTIQFNQNTSIQLITGPNMSGKSTYMRQLALTVIMAQMGSYVAADYAKLPIFDAIFTRIGAADDLISGQSTFMVEMMEANQAIQRASHDSLIIFDELGRGTATYDGMALAQSIIEHIHNRIGAITLFATHYHELTSLSEELGHLKNVHVAILERDGEVTFLHKIAEGPADKSYGIHVAKIAGLPGSLLSRADNILKQLESHSKDFIIKDNSQQSEENEPLNLLTEETSSQDIINRLKEVDVMNMTPMEAMTVLFDLKKKIK.

602 to 609 (GPNMSGKS) is an ATP binding site.

The protein belongs to the DNA mismatch repair MutS family.

This protein is involved in the repair of mismatches in DNA. It is possible that it carries out the mismatch recognition step. This protein has a weak ATPase activity. The chain is DNA mismatch repair protein MutS from Streptococcus uberis (strain ATCC BAA-854 / 0140J).